Reading from the N-terminus, the 496-residue chain is Probable malate:quinone oxidoreductase (496 aa).

This sequence belongs to the MQO family. The cofactor is FAD.

It carries out the reaction (S)-malate + a quinone = a quinol + oxaloacetate. It participates in carbohydrate metabolism; tricarboxylic acid cycle; oxaloacetate from (S)-malate (quinone route): step 1/1. In Flavobacterium psychrophilum (strain ATCC 49511 / DSM 21280 / CIP 103535 / JIP02/86), this protein is Probable malate:quinone oxidoreductase.